The chain runs to 149 residues: Transcriptional repressor NrdR (149 aa).

A zinc finger lies at 3–34; it reads CPFCSATDTKVIDSRLVAEGHQVRRRRECTEC. In terms of domain architecture, ATP-cone spans 49 to 139; that stretch reads PRVIKRDGTR…VYRAFEDVSE (91 aa).

This sequence belongs to the NrdR family. The cofactor is Zn(2+).

Functionally, negatively regulates transcription of bacterial ribonucleotide reductase nrd genes and operons by binding to NrdR-boxes. In Shewanella sp. (strain MR-4), this protein is Transcriptional repressor NrdR.